Reading from the N-terminus, the 190-residue chain is Putative 3-methyladenine DNA glycosylase (190 aa).

Belongs to the DNA glycosylase MPG family.

The protein is Putative 3-methyladenine DNA glycosylase of Chlamydia abortus (strain DSM 27085 / S26/3) (Chlamydophila abortus).